The chain runs to 139 residues: Large-conductance mechanosensitive channel (139 aa).

The next 3 helical transmembrane spans lie at 19-39, 40-60, and 81-101; these read VGVI…ADII, MPIV…LPLS, and GNFL…FMVI.

This sequence belongs to the MscL family. As to quaternary structure, homopentamer.

Its subcellular location is the cell inner membrane. Its function is as follows. Channel that opens in response to stretch forces in the membrane lipid bilayer. May participate in the regulation of osmotic pressure changes within the cell. In Nitrobacter winogradskyi (strain ATCC 25391 / DSM 10237 / CIP 104748 / NCIMB 11846 / Nb-255), this protein is Large-conductance mechanosensitive channel.